The sequence spans 1235 residues: DNA polymerase catalytic subunit (1235 aa).

Disordered regions lie at residues 640–692 (QGRF…TAGR) and 1098–1134 (AAAPGDEPAPPAALPSPAKRPRETPSPADPPGGASKP). The segment covering 650–661 (APKRPAAAREDE) has biased composition (basic and acidic residues). A compositionally biased stretch (acidic residues) spans 662 to 675 (ERPEEEGEDEDERE). The span at 676 to 691 (EGGGEREPEGARETAG) shows a compositional bias: basic and acidic residues.

This sequence belongs to the DNA polymerase type-B family. In terms of assembly, forms a complex with the ssDNA-binding protein UL29, the DNA polymerase processivity factor, and the alkaline exonuclease. Interacts with the putative helicase-primase complex subunit UL8; this interaction may coordinate leading and lagging strand DNA synthesis at the replication fork.

The protein resides in the host nucleus. The enzyme catalyses DNA(n) + a 2'-deoxyribonucleoside 5'-triphosphate = DNA(n+1) + diphosphate. It carries out the reaction Endonucleolytic cleavage to 5'-phosphomonoester.. Its function is as follows. Replicates viral genomic DNA. The replication complex is composed of six viral proteins: the DNA polymerase, processivity factor, primase, primase-associated factor, helicase, and ssDNA-binding protein. Additionally, the polymerase contains an intrinsic ribonuclease H (RNase H) activity that specifically degrades RNA/DNA heteroduplexes or duplex DNA substrates in the 5' to 3' direction. Therefore, it can catalyze the excision of the RNA primers that initiate the synthesis of Okazaki fragments at a replication fork during viral DNA replication. This chain is DNA polymerase catalytic subunit, found in Homo sapiens (Human).